Here is a 173-residue protein sequence, read N- to C-terminus: NADH-ubiquinone oxidoreductase chain 6 (173 aa).

6 helical membrane-spanning segments follow: residues 1–21 (MTYF…AVAS), 27–47 (YGVV…LSLG), 48–68 (VSFV…VVFV), 87–107 (VVGY…VGGF), 113–133 (FGVV…FSGV), and 139–159 (CGVG…FVVL).

The protein belongs to the complex I subunit 6 family.

The protein resides in the mitochondrion membrane. It carries out the reaction a ubiquinone + NADH + 5 H(+)(in) = a ubiquinol + NAD(+) + 4 H(+)(out). Core subunit of the mitochondrial membrane respiratory chain NADH dehydrogenase (Complex I) that is believed to belong to the minimal assembly required for catalysis. Complex I functions in the transfer of electrons from NADH to the respiratory chain. The immediate electron acceptor for the enzyme is believed to be ubiquinone. This is NADH-ubiquinone oxidoreductase chain 6 (MT-ND6) from Cepphus grylle (Black guillemot).